Consider the following 179-residue polypeptide: Protein TIFY 11a (179 aa).

The 36-residue stretch at 62-97 (VDGGGQQFTIFYAGKVVVIDRCTPAMAAELMRFASA) folds into the Tify domain. The short motif at 115–140 (PIARKASLKRFLAKRKATPASARSSY) is the Jas element. Residues 117 to 124 (ARKASLKR) carry the Nuclear localization signal motif.

Belongs to the TIFY/JAZ family. In terms of assembly, interacts with BHLH148. Interacts with COI1A in a coronatine-dependent manner. Interacts with COI1B in a coronatine-dependent manner. Coronatine is an analog of jasmonoyl isoleucine (JA-Ile). Interacts with RSS3. Forms a ternary complex with RSS3 and BHLH094 in the nucleus. Interacts with BHLH062 and NINJA1. Interacts with MYB30. Ubiquitinated. Targeted for degradation by the SCF(COI1) E3 ubiquitin ligase-proteasome pathway during jasmonate signaling.

The protein localises to the nucleus. Functionally, repressor of jasmonate (JA) responses. Forms a ternary complex with RSS3 and BHLH94 to negatively regulate JA-responsive genes. Acts as a positive regulator of tolerance to salt stress. Involved in salt tolerance by modulating potassium homeostasis through JA signaling and regulation of the expression of potassium ion transporter genes. Acts as a transcriptional regulator targeted by the SCF(COI1) E3 ubiquitin ligase complexes in the JA signaling pathway, and interacts with BHLH062 that may directly regulate the ion transporter genes. Acts as a positive regulator of tolerance to dehydration stress. Acts as a negative regulator of tolerance to cold stress by interacting with MYB30. The sequence is that of Protein TIFY 11a from Oryza sativa subsp. japonica (Rice).